The sequence spans 172 residues: Stellate protein CG33239/CG33241 (172 aa).

It belongs to the casein kinase 2 subunit beta family. Interacts in vitro with the casein kinase 2 alpha subunit (CkII-alpha). The relevance of such interaction is however unclear in vivo. As to expression, probably not expressed in wild-type flies. In males lacking the Y chromosome, it is testis-specific and constitutes the main component of star-shaped crystals.

In terms of biological role, unknown. In males lacking the Y chromosome, its strong overexpression leads to the appearance of proteinaceous star-shaped crystals in the primary spermatocytes causing meiotic drive, possibly by interfering with normal casein kinase 2 activity. This chain is Stellate protein CG33239/CG33241 (Ste:CG33239), found in Drosophila melanogaster (Fruit fly).